We begin with the raw amino-acid sequence, 642 residues long: Frizzled and smoothened-like protein B (642 aa).

Residues 1–26 (MFNKNNNNNKIIIILKLFLIILIVNN) form the signal peptide. The Extracellular segment spans residues 27-264 (NNNIKTFGLN…KWHQMYNMSK (238 aa)). The FZ domain maps to 47–197 (DPTATCSNYI…GFFPVPCSDP (151 aa)). 3 disulfides stabilise this stretch: Cys52/Cys123, Cys65/Cys116, and Cys143/Cys194. Asn80, Asn153, Asn162, Asn177, Asn203, Asn222, and Asn261 each carry an N-linked (GlcNAc...) asparagine glycan. A helical membrane pass occupies residues 265-285 (ILSTISFVCSIYNVLTFGILN). At 286 to 294 (HRRSKYNYC) the chain is on the cytoplasmic side. A helical transmembrane segment spans residues 295–315 (ITFFSASVIIITMMDIVTYGI). Residues 316–344 (GYEKLLCPEPGRFAVQSDVSCGATGALFH) lie on the Extracellular side of the membrane. The chain crosses the membrane as a helical span at residues 345-365 (IGITNGVFWWTTMSICLFAVV). The Cytoplasmic segment spans residues 366–375 (KRIKLFDFRY). The helical transmembrane segment at 376–398 (FIIFNTTASLISVIIPLAGNAFM) threads the bilayer. The Extracellular portion of the chain corresponds to 399-416 (AGTGSLACWIRKTWYVNS). Residues 417 to 437 (VFWIPCGIALTIGSVCIILVI) form a helical membrane-spanning segment. Residues 438 to 460 (YEIYKITKNVSTKDNRMILLQIK) lie on the Cytoplasmic side of the membrane. A helical transmembrane segment spans residues 461–481 (PFLCVTLVGGSFYYLFIFNFD). Residue Asn482 is glycosylated (N-linked (GlcNAc...) asparagine). Residues 482 to 514 (NESHSKEYKEKVVDYVMCLLSDTGKECLMAGPN) lie on the Extracellular side of the membrane. A helical membrane pass occupies residues 515–535 (YVAYFVFYFFIRLFGITFFCI). Residues 536–642 (YGTSQNARDI…INSASNTSSD (107 aa)) lie on the Cytoplasmic side of the membrane. The disordered stretch occupies residues 578–642 (GTNPTSNSKN…INSASNTSSD (65 aa)). Positions 583 to 598 (SNSKNSKNNQNNQNNN) are enriched in low complexity. Residues 584–611 (NSKNSKNNQNNQNNNSRKEFESKNIELE) adopt a coiled-coil conformation. The segment covering 599–609 (SRKEFESKNIE) has biased composition (basic and acidic residues). Polar residues-rich tracts occupy residues 614–623 (ESISKGQTTR) and 632–642 (NINSASNTSSD).

The protein belongs to the G-protein coupled receptor Fz/Smo family.

It is found in the membrane. The protein is Frizzled and smoothened-like protein B (fslB) of Dictyostelium discoideum (Social amoeba).